The chain runs to 103 residues: Large ribosomal subunit protein uL24 (103 aa).

This sequence belongs to the universal ribosomal protein uL24 family. Part of the 50S ribosomal subunit.

One of two assembly initiator proteins, it binds directly to the 5'-end of the 23S rRNA, where it nucleates assembly of the 50S subunit. Its function is as follows. One of the proteins that surrounds the polypeptide exit tunnel on the outside of the subunit. The protein is Large ribosomal subunit protein uL24 of Listeria monocytogenes serotype 4a (strain HCC23).